We begin with the raw amino-acid sequence, 476 residues long: Cys-Gly metallodipeptidase dug1 (476 aa).

His99 is a binding site for Zn(2+). Residue Asp101 is part of the active site. A Zn(2+)-binding site is contributed by Asp133. Glu167 (proton acceptor) is an active-site residue. Zn(2+)-binding residues include Glu168, Asp196, and His446.

It belongs to the peptidase M20A family. In terms of assembly, homodimer. Component of the GSH degradosomal complex. The cofactor is Zn(2+). It depends on Mn(2+) as a cofactor.

Its subcellular location is the cytoplasm. Catalytic component of the GSH degradosomal complex involved in the degradation of glutathione (GSH) and other peptides containing a gamma-glu-X bond. Has a Gly-Cys dipeptidase activity. In Schizosaccharomyces pombe (strain 972 / ATCC 24843) (Fission yeast), this protein is Cys-Gly metallodipeptidase dug1 (dug1).